The chain runs to 578 residues: Sulfite reductase [NADPH] hemoprotein beta-component (578 aa).

Positions 1–21 (MTNTLAGPDRSRDISQPLEKL) are disordered. Residues Cys443, Cys449, Cys488, and Cys492 each coordinate [4Fe-4S] cluster. Cys492 lines the siroheme pocket.

This sequence belongs to the nitrite and sulfite reductase 4Fe-4S domain family. In terms of assembly, alpha(8)-beta(8). The alpha component is a flavoprotein, the beta component is a hemoprotein. It depends on siroheme as a cofactor. The cofactor is [4Fe-4S] cluster.

It carries out the reaction hydrogen sulfide + 3 NADP(+) + 3 H2O = sulfite + 3 NADPH + 4 H(+). It functions in the pathway sulfur metabolism; hydrogen sulfide biosynthesis; hydrogen sulfide from sulfite (NADPH route): step 1/1. Its function is as follows. Component of the sulfite reductase complex that catalyzes the 6-electron reduction of sulfite to sulfide. This is one of several activities required for the biosynthesis of L-cysteine from sulfate. In Methylocella silvestris (strain DSM 15510 / CIP 108128 / LMG 27833 / NCIMB 13906 / BL2), this protein is Sulfite reductase [NADPH] hemoprotein beta-component.